Reading from the N-terminus, the 372-residue chain is Chaperone protein DnaJ (372 aa).

Positions 5–69 (DYYEVLGVSK…DKRKQYDQFG (65 aa)) constitute a J domain. The CR-type zinc finger occupies 139–221 (GVDKIIELDL…CKGKGKYLER (83 aa)). The Zn(2+) site is built by C152, C155, C169, C172, C195, C198, C209, and C212. CXXCXGXG motif repeat units follow at residues 152 to 159 (CSVCFGSG), 169 to 176 (CNNCHGTG), 195 to 202 (CNVCNGAG), and 209 to 216 (CKNCKGKG).

This sequence belongs to the DnaJ family. In terms of assembly, homodimer. Zn(2+) is required as a cofactor.

It is found in the cytoplasm. Participates actively in the response to hyperosmotic and heat shock by preventing the aggregation of stress-denatured proteins and by disaggregating proteins, also in an autonomous, DnaK-independent fashion. Unfolded proteins bind initially to DnaJ; upon interaction with the DnaJ-bound protein, DnaK hydrolyzes its bound ATP, resulting in the formation of a stable complex. GrpE releases ADP from DnaK; ATP binding to DnaK triggers the release of the substrate protein, thus completing the reaction cycle. Several rounds of ATP-dependent interactions between DnaJ, DnaK and GrpE are required for fully efficient folding. Also involved, together with DnaK and GrpE, in the DNA replication of plasmids through activation of initiation proteins. This chain is Chaperone protein DnaJ, found in Mycoplasma mycoides subsp. mycoides SC (strain CCUG 32753 / NCTC 10114 / PG1).